We begin with the raw amino-acid sequence, 443 residues long: MVTLSLTPELLAKLQSRQPLLWVNPRLGQPLPASAPSLELIAAAEARLARCAPLMAALFPELASSHGQVESQLMPATGLQYALGEGAEGAWFIKRDDQLPTAGSIKARGGFHEVLAIAESIAIEHGMLDPDGDRRVLATEAARKLFSQYSVTVGSTGNLGLSIGVMAAALGFDAVVHMSADAKAWKKDRLRKRGVRVVEHEGDYAQAVAAGREQALGATRCHFVDDERSALLFFGYAAAARHLARQLAEAGRVVDAAHPLFVYLPCGVGGAPGGITYGLKALLGDHVHCFFAEPVASPCVLVQLASGSDDPVSVYDIGLDNRTDADGLAVGQASHLVSPLMASQLAGVFTVPDDQLYVQLLALKTSMGVEVEPSAAAGIGGPGWLRDSPEGRAYVRDHGLDMRDATHVIWATGGSLVPREELHRFQAYATALAHVPGAMHKAA.

Lys-106 is subject to N6-(pyridoxal phosphate)lysine.

It belongs to the serine/threonine dehydratase family. DsdA subfamily. Requires pyridoxal 5'-phosphate as cofactor.

The enzyme catalyses D-serine = pyruvate + NH4(+). The sequence is that of Probable D-serine dehydratase from Cupriavidus pinatubonensis (strain JMP 134 / LMG 1197) (Cupriavidus necator (strain JMP 134)).